The primary structure comprises 21 residues: Dahlein-5.4 (21 aa).

As to expression, expressed by the skin dorsal glands.

It localises to the secreted. Its function is as follows. Has no antimicrobial activity. Strongly inhibits the formation of NO by neuronal nitric oxide synthase at micromolar concentrations. The polypeptide is Dahlein-5.4 (Ranoidea dahlii (Dahl's aquatic frog)).